Consider the following 510-residue polypeptide: NAD(P)H-quinone oxidoreductase subunit 2 B, chloroplastic (510 aa).

Transmembrane regions (helical) follow at residues 26–46, 57–77, 99–119, 124–144, 149–169, 183–203, 227–247, 295–315, 323–342, 354–374, 395–415, 418–438, and 484–504; these read LFDGSFIFPEGILIFGLILLL, IPWFYFISSISLVMSITALLF, IFQFLILLCSTLCIPLSVEYI, MAITEFLLFVLTATLGGMFLC, LITIFVAPECFSLCSYLLSGY, YLLMGGASSSILVHGFSWLYG, PGISIALIFITVGIGFKLSPA, WHPLLEILAILSMILGNLIAI, MLAYSSIGQIGYVIIGIIVG, YMLFYISMNLGTFACIVLFGL, ALSLALCLLSLGGLPPLAGFF, LHLFWCGWQAGLYFLVSIGLF, and MIVCVIASTIPGISMNPIIAI.

This sequence belongs to the complex I subunit 2 family. As to quaternary structure, NDH is composed of at least 16 different subunits, 5 of which are encoded in the nucleus.

The protein resides in the plastid. Its subcellular location is the chloroplast thylakoid membrane. It catalyses the reaction a plastoquinone + NADH + (n+1) H(+)(in) = a plastoquinol + NAD(+) + n H(+)(out). The catalysed reaction is a plastoquinone + NADPH + (n+1) H(+)(in) = a plastoquinol + NADP(+) + n H(+)(out). Functionally, NDH shuttles electrons from NAD(P)H:plastoquinone, via FMN and iron-sulfur (Fe-S) centers, to quinones in the photosynthetic chain and possibly in a chloroplast respiratory chain. The immediate electron acceptor for the enzyme in this species is believed to be plastoquinone. Couples the redox reaction to proton translocation, and thus conserves the redox energy in a proton gradient. The polypeptide is NAD(P)H-quinone oxidoreductase subunit 2 B, chloroplastic (Oenothera argillicola (Appalachian evening primrose)).